Here is a 270-residue protein sequence, read N- to C-terminus: UPF0354 protein Bcer98_3354 (270 aa).

It belongs to the UPF0354 family.

The polypeptide is UPF0354 protein Bcer98_3354 (Bacillus cytotoxicus (strain DSM 22905 / CIP 110041 / 391-98 / NVH 391-98)).